The chain runs to 457 residues: Arginine biosynthesis bifunctional protein ArgJ, mitochondrial (457 aa).

Substrate contacts are provided by T184, K213, T224, E312, N452, and T457. The active-site Nucleophile is T224.

It belongs to the ArgJ family. Heterodimer of an alpha and a beta chain. Post-translationally, the alpha and beta chains are autoproteolytically processed from a single precursor protein within the mitochondrion.

It localises to the mitochondrion matrix. The catalysed reaction is N(2)-acetyl-L-ornithine + L-glutamate = N-acetyl-L-glutamate + L-ornithine. The enzyme catalyses L-glutamate + acetyl-CoA = N-acetyl-L-glutamate + CoA + H(+). It functions in the pathway amino-acid biosynthesis; L-arginine biosynthesis; L-ornithine and N-acetyl-L-glutamate from L-glutamate and N(2)-acetyl-L-ornithine (cyclic): step 1/1. Its pathway is amino-acid biosynthesis; L-arginine biosynthesis; N(2)-acetyl-L-ornithine from L-glutamate: step 1/4. Functionally, catalyzes two activities which are involved in the cyclic version of arginine biosynthesis: the synthesis of acetylglutamate from glutamate and acetyl-CoA, and of ornithine by transacetylation between acetylornithine and glutamate. The polypeptide is Arginine biosynthesis bifunctional protein ArgJ, mitochondrial (Aspergillus terreus (strain NIH 2624 / FGSC A1156)).